We begin with the raw amino-acid sequence, 289 residues long: MTKPGIIFGNLISVAGGFLLAAKGDVNLVLMLASLVGLSLVVASGCAINNCIDRDIDAKMQRTCKRVTVTGEIAVGNVLAFGLALGVLGFSILALFTNALALLFAVIGYIVYVGVYSLYMKRNSVYGTLVGSFSGAVPPVVGYCSVTGQMDMGAAILLLMFSLWQMPHSYAIAIFRFNDYAAANIPVLPVAEGMTKAKLHIVLYIAVFALVSALLPLAGYTGIAFMAVTCATSLWWLAMALKGYRHGVDMQRWARQVFGFSIITITALSVTMALDFQVVSQAPLLTLVK.

The next 9 membrane-spanning stretches (helical) occupy residues Pro-4–Gly-24, Leu-28–Ile-48, Arg-66–Gly-86, Ala-99–Leu-118, Ser-124–Cys-144, Ala-155–Phe-175, Leu-199–Gly-219, Thr-221–Leu-241, and Gln-256–Phe-276.

Belongs to the UbiA prenyltransferase family. Protoheme IX farnesyltransferase subfamily.

Its subcellular location is the cell inner membrane. The catalysed reaction is heme b + (2E,6E)-farnesyl diphosphate + H2O = Fe(II)-heme o + diphosphate. The protein operates within porphyrin-containing compound metabolism; heme O biosynthesis; heme O from protoheme: step 1/1. Its function is as follows. Converts heme B (protoheme IX) to heme O by substitution of the vinyl group on carbon 2 of heme B porphyrin ring with a hydroxyethyl farnesyl side group. In Shewanella baltica (strain OS195), this protein is Protoheme IX farnesyltransferase 2.